The following is a 117-amino-acid chain: Large ribosomal subunit protein bL19 (117 aa).

This sequence belongs to the bacterial ribosomal protein bL19 family.

This protein is located at the 30S-50S ribosomal subunit interface and may play a role in the structure and function of the aminoacyl-tRNA binding site. The protein is Large ribosomal subunit protein bL19 of Bacteroides thetaiotaomicron (strain ATCC 29148 / DSM 2079 / JCM 5827 / CCUG 10774 / NCTC 10582 / VPI-5482 / E50).